The sequence spans 204 residues: ATP phosphoribosyltransferase (204 aa).

The protein belongs to the ATP phosphoribosyltransferase family. Short subfamily. As to quaternary structure, heteromultimer composed of HisG and HisZ subunits.

Its subcellular location is the cytoplasm. It carries out the reaction 1-(5-phospho-beta-D-ribosyl)-ATP + diphosphate = 5-phospho-alpha-D-ribose 1-diphosphate + ATP. Its pathway is amino-acid biosynthesis; L-histidine biosynthesis; L-histidine from 5-phospho-alpha-D-ribose 1-diphosphate: step 1/9. Functionally, catalyzes the condensation of ATP and 5-phosphoribose 1-diphosphate to form N'-(5'-phosphoribosyl)-ATP (PR-ATP). Has a crucial role in the pathway because the rate of histidine biosynthesis seems to be controlled primarily by regulation of HisG enzymatic activity. This Campylobacter concisus (strain 13826) protein is ATP phosphoribosyltransferase.